A 252-amino-acid polypeptide reads, in one-letter code: MLAKRIIPCLDVKDGKTVKGINFINFRDAGDAVELGRQYSKQGADELVYLDIIASHEERKTFIELVKKVAANINIPFTVGGGINEMQDVDRLLNAGADKISVNSAALRNPSLIEDIAKNFGSQVCVVAIDAKLEADGQWLCYLNGGRIPTNQYLFKWANEVESRGAGEILFTSITHDGVKNGYANEVLSALTGSLHIPIIASGGAGKQEHFRDAFIIGKADAALAASVFHFGEMNIKVLKNYLWRKGISIRN.

Catalysis depends on residues D11 and D130.

This sequence belongs to the HisA/HisF family. As to quaternary structure, heterodimer of HisH and HisF.

The protein localises to the cytoplasm. The catalysed reaction is 5-[(5-phospho-1-deoxy-D-ribulos-1-ylimino)methylamino]-1-(5-phospho-beta-D-ribosyl)imidazole-4-carboxamide + L-glutamine = D-erythro-1-(imidazol-4-yl)glycerol 3-phosphate + 5-amino-1-(5-phospho-beta-D-ribosyl)imidazole-4-carboxamide + L-glutamate + H(+). Its pathway is amino-acid biosynthesis; L-histidine biosynthesis; L-histidine from 5-phospho-alpha-D-ribose 1-diphosphate: step 5/9. IGPS catalyzes the conversion of PRFAR and glutamine to IGP, AICAR and glutamate. The HisF subunit catalyzes the cyclization activity that produces IGP and AICAR from PRFAR using the ammonia provided by the HisH subunit. The chain is Imidazole glycerol phosphate synthase subunit HisF from Azobacteroides pseudotrichonymphae genomovar. CFP2.